A 337-amino-acid chain; its full sequence is Ketol-acid reductoisomerase (NADP(+)) (337 aa).

In terms of domain architecture, KARI N-terminal Rossmann spans Val3–Thr183. NADP(+)-binding positions include Tyr26–Gln29, Lys49, Ser52, Ser54, and Asp84–Gln87. His109 is a catalytic residue. Gly135 is an NADP(+) binding site. Residues Thr184 to Val329 enclose the KARI C-terminal knotted domain. Positions 192, 196, 228, and 232 each coordinate Mg(2+). Ser253 contacts substrate.

This sequence belongs to the ketol-acid reductoisomerase family. The cofactor is Mg(2+).

It catalyses the reaction (2R)-2,3-dihydroxy-3-methylbutanoate + NADP(+) = (2S)-2-acetolactate + NADPH + H(+). The enzyme catalyses (2R,3R)-2,3-dihydroxy-3-methylpentanoate + NADP(+) = (S)-2-ethyl-2-hydroxy-3-oxobutanoate + NADPH + H(+). It participates in amino-acid biosynthesis; L-isoleucine biosynthesis; L-isoleucine from 2-oxobutanoate: step 2/4. It functions in the pathway amino-acid biosynthesis; L-valine biosynthesis; L-valine from pyruvate: step 2/4. In terms of biological role, involved in the biosynthesis of branched-chain amino acids (BCAA). Catalyzes an alkyl-migration followed by a ketol-acid reduction of (S)-2-acetolactate (S2AL) to yield (R)-2,3-dihydroxy-isovalerate. In the isomerase reaction, S2AL is rearranged via a Mg-dependent methyl migration to produce 3-hydroxy-3-methyl-2-ketobutyrate (HMKB). In the reductase reaction, this 2-ketoacid undergoes a metal-dependent reduction by NADPH to yield (R)-2,3-dihydroxy-isovalerate. The chain is Ketol-acid reductoisomerase (NADP(+)) from Mycolicibacterium smegmatis (strain ATCC 700084 / mc(2)155) (Mycobacterium smegmatis).